The primary structure comprises 116 residues: Aspartate 1-decarboxylase (116 aa).

Serine 25 functions as the Schiff-base intermediate with substrate; via pyruvic acid in the catalytic mechanism. Residue serine 25 is modified to Pyruvic acid (Ser). Residue threonine 57 participates in substrate binding. Tyrosine 58 acts as the Proton donor in catalysis. 73–75 (GAA) contacts substrate.

It belongs to the PanD family. In terms of assembly, heterooctamer of four alpha and four beta subunits. Pyruvate is required as a cofactor. In terms of processing, is synthesized initially as an inactive proenzyme, which is activated by self-cleavage at a specific serine bond to produce a beta-subunit with a hydroxyl group at its C-terminus and an alpha-subunit with a pyruvoyl group at its N-terminus.

The protein localises to the cytoplasm. The enzyme catalyses L-aspartate + H(+) = beta-alanine + CO2. Its pathway is cofactor biosynthesis; (R)-pantothenate biosynthesis; beta-alanine from L-aspartate: step 1/1. Catalyzes the pyruvoyl-dependent decarboxylation of aspartate to produce beta-alanine. The sequence is that of Aspartate 1-decarboxylase from Leptospira interrogans serogroup Icterohaemorrhagiae serovar copenhageni (strain Fiocruz L1-130).